We begin with the raw amino-acid sequence, 153 residues long: Proline-rich membrane anchor 1 (153 aa).

Residues 1-35 (MLLRDLVLRRGCCWSSLLLHCALHPLWGFVQVTHG) form the signal peptide. Residues 36-92 (EPQKSCSKVTDSCRHVCQCRPPPPLPPPPPPPPPPRLLSAPAPNSTSCPTEESWWSG) lie on the Extracellular side of the membrane. In terms of domain architecture, PRAD spans 56–70 (PPPPLPPPPPPPPPP). Pro residues predominate over residues 59–71 (PLPPPPPPPPPPR). Positions 59-79 (PLPPPPPPPPPPRLLSAPAPN) are disordered. An N-linked (GlcNAc...) asparagine glycan is attached at N79. The helical transmembrane segment at 93–113 (LVIIIAVCCASLVFLTVLVII) threads the bilayer. Residues 114-153 (CYKAIKRKPLRKDENGTSVAEYPMSASQSNKGVDVNNAVV) are Cytoplasmic-facing.

As to quaternary structure, interacts with ACHE, probably through disulfide bonds.

It localises to the cell membrane. Its subcellular location is the cell junction. The protein resides in the synapse. Functionally, required to anchor acetylcholinesterase (ACHE) to the basal lamina of the neuromuscular junction and to the membrane of neuronal synapses in brain. Also able to organize ACHE into tetramers. The sequence is that of Proline-rich membrane anchor 1 (PRIMA1) from Homo sapiens (Human).